Here is a 589-residue protein sequence, read N- to C-terminus: GTPase LSG1-2 (589 aa).

Residues 1-26 (MGKSEKTSLGRSLVKHHNHMIQESKD) are disordered. The region spanning 158–366 (WRQLWRVLER…LCDCPGLVFP (209 aa)) is the CP-type G domain. Residues 176-180 (DARDP) carry the DARXP motif motif. The G4 stretch occupies residues 206–209 (NKAD). 206–209 (NKAD) contacts GTP. The G5 stretch occupies residues 237-239 (AAT). The G1 stretch occupies residues 315–322 (GYPNVGKS). A GTP-binding site is contributed by 318-323 (NVGKSS). Positions 341–345 (GKTKH) are G2. Residues 359–362 (DCPG) are G3. Gly-362 is a binding site for GTP. Residues 495-509 (GSESDDSAVGDETEN) show a composition bias toward acidic residues. Disordered stretches follow at residues 495-515 (GSES…VPGI) and 534-589 (SKKV…LTMR). A Nuclear localization signal motif is present at residues 534-541 (SKKVTAKK). Basic residues predominate over residues 534–558 (SKKVTAKKQTASHKQHKKPQRKKDR). Residues 580 to 589 (PANTGPLTMR) are compositionally biased toward polar residues.

Belongs to the TRAFAC class YlqF/YawG GTPase family. Ubiquitous, with the highest expression in reproductive and strongly dividing tissues.

It is found in the cytoplasm. The protein localises to the nucleus. In terms of biological role, GTPase involved in ribosome biogenesis. Binds to 23S rRNA and associates with 60S pre-ribosomes. Involved in early cotyledon and leaf development. This is GTPase LSG1-2 from Arabidopsis thaliana (Mouse-ear cress).